A 403-amino-acid chain; its full sequence is DNA replication and repair protein RecF (403 aa).

30–37 (GSNGLGKT) provides a ligand contact to ATP.

Belongs to the RecF family.

It localises to the cytoplasm. Its function is as follows. The RecF protein is involved in DNA metabolism; it is required for DNA replication and normal SOS inducibility. RecF binds preferentially to single-stranded, linear DNA. It also seems to bind ATP. This is DNA replication and repair protein RecF from Bifidobacterium adolescentis (strain ATCC 15703 / DSM 20083 / NCTC 11814 / E194a).